A 185-amino-acid chain; its full sequence is Ribosome-recycling factor (185 aa).

It belongs to the RRF family.

It is found in the cytoplasm. Responsible for the release of ribosomes from messenger RNA at the termination of protein biosynthesis. May increase the efficiency of translation by recycling ribosomes from one round of translation to another. The polypeptide is Ribosome-recycling factor (Saccharopolyspora erythraea (strain ATCC 11635 / DSM 40517 / JCM 4748 / NBRC 13426 / NCIMB 8594 / NRRL 2338)).